We begin with the raw amino-acid sequence, 216 residues long: Probable GTP-binding protein EngB (216 aa).

Positions 26 to 200 (EGIEIAFAGR…RAKLDTWFAP (175 aa)) constitute an EngB-type G domain. Residues 34-41 (GRSNAGKS), 61-65 (GRTQL), 79-82 (DLPG), 146-149 (TKAD), and 179-181 (YSS) each bind GTP. The Mg(2+) site is built by Ser41 and Thr63.

This sequence belongs to the TRAFAC class TrmE-Era-EngA-EngB-Septin-like GTPase superfamily. EngB GTPase family. Mg(2+) is required as a cofactor.

Functionally, necessary for normal cell division and for the maintenance of normal septation. In Vibrio vulnificus (strain YJ016), this protein is Probable GTP-binding protein EngB.